Consider the following 300-residue polypeptide: tRNA pseudouridine synthase B (300 aa).

D47 acts as the Nucleophile in catalysis.

Belongs to the pseudouridine synthase TruB family. Type 1 subfamily.

The enzyme catalyses uridine(55) in tRNA = pseudouridine(55) in tRNA. Responsible for synthesis of pseudouridine from uracil-55 in the psi GC loop of transfer RNAs. This Azoarcus sp. (strain BH72) protein is tRNA pseudouridine synthase B.